A 78-amino-acid chain; its full sequence is Conotoxin 6 (78 aa).

An N-terminal signal peptide occupies residues 1–22; sequence MKLTCMMIVAVLFLTAWIFITA. Residues 23-51 constitute a propeptide that is removed on maturation; that stretch reads DNSRNGIENLPRMRRHEMKNPKASKLNKR. Intrachain disulfides connect C53/C69, C60/C73, and C68/C77.

This sequence belongs to the conotoxin O1 superfamily. In terms of tissue distribution, expressed by the venom duct.

It is found in the secreted. In Conus imperialis (Imperial cone), this protein is Conotoxin 6.